The primary structure comprises 296 residues: Urease accessory protein UreD (296 aa).

This sequence belongs to the UreD family. As to quaternary structure, ureD, UreF and UreG form a complex that acts as a GTP-hydrolysis-dependent molecular chaperone, activating the urease apoprotein by helping to assemble the nickel containing metallocenter of UreC. The UreE protein probably delivers the nickel.

The protein resides in the cytoplasm. In terms of biological role, required for maturation of urease via the functional incorporation of the urease nickel metallocenter. The chain is Urease accessory protein UreD from Synechococcus sp. (strain CC9311).